The chain runs to 247 residues: Protein NipSnap homolog 3B (247 aa).

N6-succinyllysine is present on residues lysine 45, lysine 48, lysine 57, and lysine 166.

This sequence belongs to the NipSnap family.

The protein resides in the cytoplasm. It is found in the cytosol. This Mus musculus (Mouse) protein is Protein NipSnap homolog 3B (Nipsnap3b).